The chain runs to 283 residues: Small aggregate formation protein (283 aa).

Its subcellular location is the cytoplasm. In terms of biological role, knockout of the gene for this protein causes small aggregate formation. May regulate the secretion or processing of a secreted factor that regulates aggregate size. The protein is Small aggregate formation protein (smlA) of Dictyostelium discoideum (Social amoeba).